The primary structure comprises 1488 residues: Indigoidine synthase (1488 aa).

Residues 229-585 (KNRAQRHPEQ…GGDGVARGYL (357 aa)) are adenylation. A Carrier domain is found at 1137–1212 (APRNPLEHQV…KLAAWLSRAR (76 aa)). S1172 is modified (O-(pantetheine 4'-phosphoryl)serine). The interval 1230–1346 (PIYCWPGLGG…ERVAAMNRKA (117 aa)) is thioesterase.

It belongs to the ATP-dependent AMP-binding enzyme family. Requires pantetheine 4'-phosphate as cofactor.

The enzyme catalyses 2 FMN + 2 L-glutamine + 2 ATP + O2 = indigoidine + 2 FMNH2 + 2 AMP + 2 diphosphate + 2 H2O. It catalyses the reaction FMN + L-glutamine + ATP = 3-amino-1,5-dihydropyridine-2,6-dione + FMNH2 + AMP + diphosphate. The catalysed reaction is 2 3-amino-1,5-dihydropyridine-2,6-dione + O2 = indigoidine + 2 H2O. It participates in pigment biosynthesis. Nonribosomal peptide synthetase involved in the biosynthesis of the blue pigment indigoidine, which is implicated in pathogenicity and protection from oxidative stress. Catalyzes the synthesis of the blue pigment using L-Gln as a substrate. Two glutamine molecules are cyclized and oxidized to form indigoidine. This chain is Indigoidine synthase, found in Dickeya dadantii (strain 3937) (Erwinia chrysanthemi (strain 3937)).